The following is a 171-amino-acid chain: Adenine phosphoribosyltransferase (171 aa).

Belongs to the purine/pyrimidine phosphoribosyltransferase family. Homodimer.

Its subcellular location is the cytoplasm. It carries out the reaction AMP + diphosphate = 5-phospho-alpha-D-ribose 1-diphosphate + adenine. It functions in the pathway purine metabolism; AMP biosynthesis via salvage pathway; AMP from adenine: step 1/1. In terms of biological role, catalyzes a salvage reaction resulting in the formation of AMP, that is energically less costly than de novo synthesis. This chain is Adenine phosphoribosyltransferase, found in Rhodospirillum rubrum (strain ATCC 11170 / ATH 1.1.1 / DSM 467 / LMG 4362 / NCIMB 8255 / S1).